The following is a 468-amino-acid chain: Charged multivesicular body protein 7 (468 aa).

2 coiled-coil regions span residues 233–303 (EKLL…AETD) and 353–379 (VSDA…MIVD). Residues 428–468 (DVPSGPVVISPQRPTEWKTDQASRSPADGSFSRSVPEPVLQ) form a disordered region.

This sequence belongs to the SNF7 family.

The protein resides in the cytoplasm. Its subcellular location is the nucleus envelope. Its function is as follows. ESCRT-III-like protein required to recruit the ESCRT-III complex to the nuclear envelope during late anaphase. Together with SPAST, the ESCRT-III complex promotes nuclear envelope sealing and mitotic spindle disassembly during late anaphase. Plays a role in the endosomal sorting pathway. The polypeptide is Charged multivesicular body protein 7 (chmp7) (Xenopus tropicalis (Western clawed frog)).